A 232-amino-acid polypeptide reads, in one-letter code: Ribonuclease 3 (232 aa).

Residues 5-134 enclose the RNase III domain; it reads ENLLFDRFGL…FLGALLLDKG (130 aa). Glu-47 is a binding site for Mg(2+). Asp-51 is an active-site residue. Mg(2+) is bound by residues Asp-120 and Glu-123. The active site involves Glu-123. In terms of domain architecture, DRBM spans 160–229; it reads DYKTKLQELL…AKNAFEKENH (70 aa).

This sequence belongs to the ribonuclease III family. As to quaternary structure, homodimer. Mg(2+) serves as cofactor.

The protein localises to the cytoplasm. It catalyses the reaction Endonucleolytic cleavage to 5'-phosphomonoester.. Its function is as follows. Digests double-stranded RNA. Involved in the processing of primary rRNA transcript to yield the immediate precursors to the large and small rRNAs (23S and 16S). Processes some mRNAs, and tRNAs when they are encoded in the rRNA operon. Processes pre-crRNA and tracrRNA of type II CRISPR loci if present in the organism. This is Ribonuclease 3 from Streptococcus gordonii (strain Challis / ATCC 35105 / BCRC 15272 / CH1 / DL1 / V288).